The sequence spans 151 residues: Large ribosomal subunit protein uL13 (151 aa).

It belongs to the universal ribosomal protein uL13 family. As to quaternary structure, part of the 50S ribosomal subunit.

Functionally, this protein is one of the early assembly proteins of the 50S ribosomal subunit, although it is not seen to bind rRNA by itself. It is important during the early stages of 50S assembly. In Synechocystis sp. (strain ATCC 27184 / PCC 6803 / Kazusa), this protein is Large ribosomal subunit protein uL13.